Here is a 100-residue protein sequence, read N- to C-terminus: Urease subunit gamma (100 aa).

This sequence belongs to the urease gamma subunit family. As to quaternary structure, heterotrimer of UreA (gamma), UreB (beta) and UreC (alpha) subunits. Three heterotrimers associate to form the active enzyme.

The protein resides in the cytoplasm. It carries out the reaction urea + 2 H2O + H(+) = hydrogencarbonate + 2 NH4(+). It functions in the pathway nitrogen metabolism; urea degradation; CO(2) and NH(3) from urea (urease route): step 1/1. In Ralstonia pickettii (strain 12J), this protein is Urease subunit gamma.